The sequence spans 637 residues: Chaperone protein DnaK (637 aa).

Thr-198 bears the Phosphothreonine; by autocatalysis mark. Positions 597–637 (MYAKTSQAGAGPQPGAGPGTGGQGPGKKDEDVVDADFEEVK) are disordered. Residues 608 to 621 (PQPGAGPGTGGQGP) are compositionally biased toward gly residues. Acidic residues predominate over residues 627 to 637 (DVVDADFEEVK).

It belongs to the heat shock protein 70 family.

Acts as a chaperone. The protein is Chaperone protein DnaK of Syntrophus aciditrophicus (strain SB).